We begin with the raw amino-acid sequence, 689 residues long: Protein asunder (689 aa).

Positions 521-550 (NGARLKLSKAKDQYRLLYRELEQLIQLNAT) form a coiled coil. Disordered stretches follow at residues 578 to 619 (GASL…SKRR) and 662 to 689 (PDFG…SVRS). Low complexity predominate over residues 599–614 (SSGSASGSSNSNSLLK). The short motif at 613-619 (LKASKRR) is the Nuclear localization signal (NLS) element.

This sequence belongs to the Integrator subunit 13 family. Belongs to the multiprotein complex Integrator, at least composed of IntS1, IntS2, IntS3, IntS4, omd/IntS5, IntS6, defl/IntS7, IntS8, IntS9, IntS10, IntS11, IntS12, asun/IntS13, IntS14 and IntS15. The core complex associates with protein phosphatase 2A subunits mts/PP2A and Pp2A-29B, to form the Integrator-PP2A (INTAC) complex. In terms of processing, phosphorylated.

The protein localises to the nucleus. It is found in the cytoplasm. It localises to the perinuclear region. Component of the integrator complex, a multiprotein complex that terminates RNA polymerase II (Pol II) transcription in the promoter-proximal region of genes. The integrator complex provides a quality checkpoint during transcription elongation by driving premature transcription termination of transcripts that are unfavorably configured for transcriptional elongation: the complex terminates transcription by (1) catalyzing dephosphorylation of the C-terminal domain (CTD) of Pol II subunit Polr2A/Rbp1 and Spt5, and (2) degrading the exiting nascent RNA transcript via endonuclease activity. The integrator complex is also involved in the 3'-end processing of the U7 snRNA, and also the spliceosomal snRNAs U1, U2, U4 and U5. This chain is Protein asunder (asun), found in Drosophila yakuba (Fruit fly).